The primary structure comprises 93 residues: Muconolactone Delta-isomerase (93 aa).

This sequence belongs to the muconolactone Delta-isomerase family. In terms of assembly, homodecamer.

It carries out the reaction (S)-muconolactone = (4,5-dihydro-5-oxofuran-2-yl)-acetate. It participates in aromatic compound metabolism; beta-ketoadipate pathway; 5-oxo-4,5-dihydro-2-furylacetate from catechol: step 3/3. The polypeptide is Muconolactone Delta-isomerase (catC) (Rhodococcus opacus (Nocardia opaca)).